Here is a 122-residue protein sequence, read N- to C-terminus: Large ribosomal subunit protein uL14 (122 aa).

This sequence belongs to the universal ribosomal protein uL14 family. As to quaternary structure, part of the 50S ribosomal subunit. Forms a cluster with proteins L3 and L19. In the 70S ribosome, L14 and L19 interact and together make contacts with the 16S rRNA in bridges B5 and B8.

Its function is as follows. Binds to 23S rRNA. Forms part of two intersubunit bridges in the 70S ribosome. The sequence is that of Large ribosomal subunit protein uL14 from Mycoplasma pneumoniae (strain ATCC 29342 / M129 / Subtype 1) (Mycoplasmoides pneumoniae).